Reading from the N-terminus, the 519-residue chain is Trichothecene 15-O-acetyltransferase TRI3 (519 aa).

A 15-deacetylcalonectrin-binding site is contributed by H414.

The protein belongs to the trichothecene O-acetyltransferase family.

The protein operates within sesquiterpene biosynthesis; trichothecene biosynthesis. 15-O-acetyltransferase; part of the core gene cluster that mediates the biosynthesis of trichothecenes, a very large family of chemically related bicyclic sesquiterpene compounds acting as mycotoxins, including T2-toxin. The biosynthesis of trichothecenes begins with the cyclization of farnesyl diphosphate to trichodiene and is catalyzed by the trichodiene synthase TRI5. Trichodiene undergoes a series of oxygenations catalyzed by the cytochrome P450 monooxygenase TRI4. TRI4 controls the addition of four oxygens at C-2, C-3, C-11, and the C-12, C-13-epoxide to form the intermediate isotrichotriol. Isotrichotriol then undergoes a non-enzymatic isomerization and cyclization to form isotrichodermol. During this process, the oxygen at the C-2 position becomes the pyran ring oxygen and the hydroxyl group at C-11 is lost. More complex type A trichothecenes are built by modifying isotrichodermol through a series of paired hydroxylation and acetylation or acylation steps. Isotrichodermol is converted to isotrichodermin by the acetyltransferase TRI101. TRI101 encodes a C-3 transacetylase that acts as a self-protection or resistance factor during biosynthesis and that the presence of a free C-3 hydroxyl group is a key component of Fusarium trichothecene phytotoxicity. A second hydroxyl group is added to C-15 by the trichothecene C-15 hydroxylase TRI11, producing 15-decalonectrin, which is then acetylated by TRI3, producing calonectrin. A third hydroxyl group is added at C-4 by the cytochrome P450 monooxygenase TRI13, converting calonectrin to 3,15-diacetoxyspirpenol, which is subsequently acetylated by the acetyltransferase TRI7. A fourth hydroxyl group is added to C-8 by the cytochrome P450 monooxygenase TRI1, followed by the addition of an isovaleryl moiety by TRI16. Finally, the acetyl group is removed from the C-3 position by the trichothecene C-3 esterase TRI8 to produce T-2 toxin. This is Trichothecene 15-O-acetyltransferase TRI3 from Fusarium sporotrichioides.